The sequence spans 158 residues: Rhombotin-2 (158 aa).

LIM zinc-binding domains follow at residues 28–90 (LTCG…LFGQ) and 92–154 (GLCA…WTKL).

As to expression, expression becomes restricted to the ventral blood island (VBI) as the embryo develops. In late neurula and early tailbud embryos, also expressed in the dorsal lateral plate (DLP), the site of definitive hematopoiesis in the tadpole. Expression in the DLP diminishes during tailbud stages. Expressed in circulating blood cells of tadpoles. Also expressed in non-hematopoietic sites, including the tailbud region and the central nervous system of early neurula embryos.

Its subcellular location is the nucleus. Transcription factor that acts synergistically with tal1/scl and gata1 to specify embryonic dorsal mesoderm to a hematopoietic fate. Induces globin gene expression together with fgf. The protein is Rhombotin-2 of Xenopus laevis (African clawed frog).